We begin with the raw amino-acid sequence, 634 residues long: 1-deoxy-D-xylulose-5-phosphate synthase (634 aa).

Residues His72 and 113-115 (GHS) contribute to the thiamine diphosphate site. Asp144 is a binding site for Mg(2+). Thiamine diphosphate-binding positions include 145-146 (GA), Asn173, Tyr284, and Glu367. Position 173 (Asn173) interacts with Mg(2+).

This sequence belongs to the transketolase family. DXPS subfamily. In terms of assembly, homodimer. It depends on Mg(2+) as a cofactor. The cofactor is thiamine diphosphate.

It carries out the reaction D-glyceraldehyde 3-phosphate + pyruvate + H(+) = 1-deoxy-D-xylulose 5-phosphate + CO2. It participates in metabolic intermediate biosynthesis; 1-deoxy-D-xylulose 5-phosphate biosynthesis; 1-deoxy-D-xylulose 5-phosphate from D-glyceraldehyde 3-phosphate and pyruvate: step 1/1. Catalyzes the acyloin condensation reaction between C atoms 2 and 3 of pyruvate and glyceraldehyde 3-phosphate to yield 1-deoxy-D-xylulose-5-phosphate (DXP). The polypeptide is 1-deoxy-D-xylulose-5-phosphate synthase (Listeria welshimeri serovar 6b (strain ATCC 35897 / DSM 20650 / CCUG 15529 / CIP 8149 / NCTC 11857 / SLCC 5334 / V8)).